A 317-amino-acid chain; its full sequence is Probable porphobilinogen deaminase (317 aa).

C234 carries the post-translational modification S-(dipyrrolylmethanemethyl)cysteine.

The protein belongs to the HMBS family. Dipyrromethane serves as cofactor.

It carries out the reaction 4 porphobilinogen + H2O = hydroxymethylbilane + 4 NH4(+). Its pathway is porphyrin-containing compound metabolism; protoporphyrin-IX biosynthesis; coproporphyrinogen-III from 5-aminolevulinate: step 2/4. Its function is as follows. Tetrapolymerization of the monopyrrole PBG into the hydroxymethylbilane pre-uroporphyrinogen in several discrete steps. In Methanosarcina acetivorans (strain ATCC 35395 / DSM 2834 / JCM 12185 / C2A), this protein is Probable porphobilinogen deaminase.